The sequence spans 347 residues: Calcium homeostasis modulator protein 3 (347 aa).

Residues 1–20 lie on the Cytoplasmic side of the membrane; sequence MDRFRMLFQHLQSSSESVMN. Residues 9–36 form a central pore region; sequence QHLQSSSESVMNGICLLLAAVTVKIYSS. Residues 21-36 form a helical membrane-spanning segment; the sequence is GICLLLAAVTVKIYSS. Residues 37–48 lie on the Extracellular side of the membrane; the sequence is LDFNCPCLERYN. Intrachain disulfides connect Cys41/Cys126 and Cys43/Cys157. The helical transmembrane segment at 49 to 71 threads the bilayer; that stretch reads ALYGLGLLLTPPLALFLCGLLVN. Topologically, residues 72 to 98 are cytoplasmic; that stretch reads RQSVLMVEEWRRPAGHRRKDLGIIRYM. A lipid anchor (S-palmitoyl cysteine) is attached at Cys99. The chain crosses the membrane as a helical span at residues 99–124; it reads CSSVLQRALAAPLVWILLALLDGKCF. At 125–176 the chain is on the extracellular side; sequence VCAFSNSVDPEKFLDFANMTPRQVQLFLAKVPCKEDELVKNSPARKAVSRYL. An N-linked (GlcNAc...) asparagine glycan is attached at Asn142. A helical transmembrane segment spans residues 177 to 202; the sequence is RCLSQAIGWSITLLVIVVAFLARCLR. 2 S-palmitoyl cysteine lipidation sites follow: Cys200 and Cys204. Residues 203-347 are Cytoplasmic-facing; it reads PCFDQTVFLQ…GTKLCHQLNV (145 aa). The segment at 265 to 290 is disordered; sequence GGIPESQESSEPPELREDRDSGNGKA. Residues 277 to 286 are compositionally biased toward basic and acidic residues; it reads PELREDRDSG.

This sequence belongs to the CALHM family. As to quaternary structure, associates with CALHM1 as a pore-forming subunit in a hetero-hexameric channel complex. N-glycosylated. In terms of processing, palmitoylated by ZDHHC3 and ZDHHC15. Palmitoylation positively regulates CALHM1:CALHM3 channel conductance. In terms of tissue distribution, expressed in taste bud cells.

It is found in the basolateral cell membrane. It carries out the reaction ATP(in) = ATP(out). It catalyses the reaction Ca(2+)(in) = Ca(2+)(out). The catalysed reaction is Na(+)(in) = Na(+)(out). The enzyme catalyses K(+)(in) = K(+)(out). It carries out the reaction chloride(in) = chloride(out). In terms of biological role, pore-forming subunit of gustatory voltage-gated ion channels required for sensory perception of sweet, bitter and umami tastes. With CALHM1 forms a fast-activating voltage-gated ATP-release channel in type II taste bud cells, ATP acting as a neurotransmitter to activate afferent neural gustatory pathways. Acts both as a voltage-gated and calcium-activated ion channel: mediates neuronal excitability in response to membrane depolarization and low extracellular Ca(2+) concentration. Has poor ion selectivity and forms a wide pore (around 14 Angstroms) that mediates permeation of small ions including Ca(2+), Na(+), K(+) and Cl(-), as well as larger ions such as ATP(4-). This Mus musculus (Mouse) protein is Calcium homeostasis modulator protein 3.